The sequence spans 235 residues: Leucyl/phenylalanyl-tRNA--protein transferase (235 aa).

This sequence belongs to the L/F-transferase family.

The protein localises to the cytoplasm. The catalysed reaction is N-terminal L-lysyl-[protein] + L-leucyl-tRNA(Leu) = N-terminal L-leucyl-L-lysyl-[protein] + tRNA(Leu) + H(+). The enzyme catalyses N-terminal L-arginyl-[protein] + L-leucyl-tRNA(Leu) = N-terminal L-leucyl-L-arginyl-[protein] + tRNA(Leu) + H(+). It catalyses the reaction L-phenylalanyl-tRNA(Phe) + an N-terminal L-alpha-aminoacyl-[protein] = an N-terminal L-phenylalanyl-L-alpha-aminoacyl-[protein] + tRNA(Phe). Functions in the N-end rule pathway of protein degradation where it conjugates Leu, Phe and, less efficiently, Met from aminoacyl-tRNAs to the N-termini of proteins containing an N-terminal arginine or lysine. This chain is Leucyl/phenylalanyl-tRNA--protein transferase, found in Shewanella frigidimarina (strain NCIMB 400).